A 143-amino-acid chain; its full sequence is MQPQLSRPQTASNQVRKAVSGPWSGNAVHKAEKYFITSAKRDRDGKLQIELVPASGRRKLSPTPEMIRRLIDGEIEIYILTTQPDIAIDMNKEIIDMENRYVIDFDKRGVKWTMREIPVFYHEGKGLCVELHNKIYTLDQFFK.

A compositionally biased stretch (polar residues) spans 1–15 (MQPQLSRPQTASNQV). The tract at residues 1–24 (MQPQLSRPQTASNQVRKAVSGPWS) is disordered.

In terms of assembly, component of the P840 reaction center.

The protein is P840 reaction center 17 kDa protein (pscD) of Chlorobaculum tepidum (strain ATCC 49652 / DSM 12025 / NBRC 103806 / TLS) (Chlorobium tepidum).